The chain runs to 301 residues: tRNA dimethylallyltransferase 1 (301 aa).

11-18 lines the ATP pocket; it reads GPTGVGKT. A substrate-binding site is contributed by 13–18; sequence TGVGKT. Residues 36 to 39 form an interaction with substrate tRNA region; the sequence is DSRQ.

The protein belongs to the IPP transferase family. As to quaternary structure, monomer. Mg(2+) serves as cofactor.

It catalyses the reaction adenosine(37) in tRNA + dimethylallyl diphosphate = N(6)-dimethylallyladenosine(37) in tRNA + diphosphate. Catalyzes the transfer of a dimethylallyl group onto the adenine at position 37 in tRNAs that read codons beginning with uridine, leading to the formation of N6-(dimethylallyl)adenosine (i(6)A). The polypeptide is tRNA dimethylallyltransferase 1 (Bacteroides fragilis (strain YCH46)).